Reading from the N-terminus, the 416-residue chain is PRKCA-binding protein (416 aa).

The region spanning 22 to 105 (KVTLQKDAQN…EVTIHYNKLQ (84 aa)) is the PDZ domain. Positions 44 and 46 each coordinate Zn(2+). T82 is subject to Phosphothreonine. The AH domain occupies 144–357 (LCNDGLVKRL…CYAVLRDADV (214 aa)). The segment at 373–416 (PNQGGFTDGEDEEEEEEDGAAREVSKDARGATGPTDKGGSWCDS) is disordered. The segment covering 380–390 (DGEDEEEEEED) has biased composition (acidic residues). The segment covering 391–401 (GAAREVSKDAR) has biased composition (basic and acidic residues). C414 is lipidated: S-palmitoyl cysteine; by DHHC8.

As to quaternary structure, monomer and homodimer. Interacts with CXADR. Interacts presynaptically with the glutamate receptors GRIA2, GRIA3, GRIK3, isoform 3 of GRIA4, isoform A of GRM4, GRM7 and GRM8; with NAPA and NAPB; and with BTG2. The interaction with NAPA and NAPB disrupts the interaction with GRIA2, conducting to the internalization of GRIA2. Interacts with PRKCA; with the amine transporters SLC6A2 and SLC6A3; with the channels ASIC1 and ASIC2; with the GTP-binding proteins ARF1 and ARF3; with the ephrin receptor tyrosine kinases EPHA7, EPHB1 and EPHB2; with ERBB2 and through its PDZ domain with the C-terminal tail of PRLHR. Interacts with UNC5A. Interacts (via AH domain) with NCS1/FREQ; in a calcium-dependent manner. Interacts with F-actin and associates with the ARP2/3 complex. Interacts (via PDZ domain) with ARF1 (activated); the interaction blocks Arp2/3 complex inhibition. Interacts with SORCS3. In terms of processing, phosphorylation at Thr-82 appears to inhibit the interaction with AMPA receptors. Palmitoylation on Cys-414 is essential for long-term synaptic depression (LTD). Ubiquitous.

It localises to the cytoplasm. Its subcellular location is the perinuclear region. The protein localises to the membrane. The protein resides in the postsynaptic density. It is found in the synapse. It localises to the synaptosome. Its subcellular location is the cytoskeleton. Probable adapter protein that bind to and organize the subcellular localization of a variety of membrane proteins containing some PDZ recognition sequence. Involved in the clustering of various receptors, possibly by acting at the receptor internalization level. Plays a role in synaptic plasticity by regulating the trafficking and internalization of AMPA receptors. May be regulated upon PRKCA activation. May regulate ASIC1/ASIC3 channel. Regulates actin polymerization by inhibiting the actin-nucleating activity of the Arp2/3 complex; the function is competitive with nucleation promoting factors and is linked to neuronal morphology regulation and AMPA receptor (AMPAR) endocytosis. Via interaction with the Arp2/3 complex involved in regulation of synaptic plasicity of excitatory synapses and required for spine shrinkage during long-term depression (LTD). Involved in regulation of astrocyte morphology, antagonistic to Arp2/3 complex activator WASL/N-WASP function. The chain is PRKCA-binding protein (Pick1) from Rattus norvegicus (Rat).